Consider the following 606-residue polypeptide: MSSKILLTNLRTSASFCKTLKFPQRPRTPFIASQQSCAIHVDNPPSIPTLTTSYVHGLSSHPLQSSTVDQCLQATVERYPDREAMVFVQDGIRKTFAEFYQDVEKAAAGLLAAGLKRGDRLGMWGPNIYEWVLMQFATAKAGIILVAVNPAYQLQEVEFALRKVQCNAVVCPTKFKSQHYCDMLKQLCPEMETASPGGIKSSRLPDLHTVIVTDSQQPGSFLLKDLMQAGSSQHYQQLQDLQKKLVCDDPINIQFTSGTTGKPKGATLSHHNIVNNAYFTGMRIGYNWRKNVRICLPVPLYHCFGSVGGGVIMALYGTTVIFPSTGYDGRANLRAIEKEKCTFVYGTPTMYIDMLGQPDLAKFDLSSVRGGIAAGSPCPPEVMRKILNVMGIKEMVIGYGTTENSPVTFCGFPVDSAERKIVTVGCISPHTEAKVVDPTTGEIVPLGAQGELMIRGYCVMLEYWQDEEKTRECITKDRWYKTGDIASLDQFAYCKIEGRIKDLIIRGGENIYPAEIEQFLHTHPKILEAQVVGVKDERMGEEVCACIRLKEGQECTVEEIKAYCKGKIAHYKVPRYILFVQDYPLTITGKIQKHKLRERTEKQLGL.

The transit peptide at 1–13 (MSSKILLTNLRTS) directs the protein to the mitochondrion. Residues 256–264 (TSGTTGKPK), Asp-484, Arg-499, and Lys-590 contribute to the ATP site.

Belongs to the ATP-dependent AMP-binding enzyme family.

Its subcellular location is the mitochondrion. It carries out the reaction a medium-chain fatty acid + ATP + CoA = a medium-chain fatty acyl-CoA + AMP + diphosphate. The catalysed reaction is octanoate + ATP + CoA = octanoyl-CoA + AMP + diphosphate. Its function is as follows. Acyl-CoA synthases catalyze the initial reaction in fatty acid metabolism, by forming a thioester with CoA. Has some preference toward medium-chain substrates. Plays a role in adipocyte differentiation. This chain is Medium-chain acyl-CoA ligase ACSF2, mitochondrial, found in Danio rerio (Zebrafish).